The chain runs to 639 residues: DNA gyrase subunit B (639 aa).

Basic and acidic residues predominate over residues 392–402 (QAEELTRRKSA). Residues 392–416 (QAEELTRRKSALESTSLPGKLADCQ) form a disordered region. One can recognise a Toprim domain in the interval 423-537 (SELFIVEGDS…AGYVYAAQPP (115 aa)). Mg(2+) contacts are provided by Glu429, Asp502, and Asp504. Residue Lys624 forms a Glycyl lysine isopeptide (Lys-Gly) (interchain with G-Cter in SAMP2) linkage.

The protein belongs to the type II topoisomerase GyrB family. In terms of assembly, heterotetramer, composed of two GyrA and two GyrB chains. In the heterotetramer, GyrA contains the active site tyrosine that forms a transient covalent intermediate with DNA, while GyrB binds cofactors and catalyzes ATP hydrolysis. The cofactor is Mg(2+). It depends on Mn(2+) as a cofactor. Requires Ca(2+) as cofactor.

It localises to the cytoplasm. The catalysed reaction is ATP-dependent breakage, passage and rejoining of double-stranded DNA.. In terms of biological role, a type II topoisomerase that negatively supercoils closed circular double-stranded (ds) DNA in an ATP-dependent manner to modulate DNA topology and maintain chromosomes in an underwound state. Negative supercoiling favors strand separation, and DNA replication, transcription, recombination and repair, all of which involve strand separation. Also able to catalyze the interconversion of other topological isomers of dsDNA rings, including catenanes and knotted rings. Type II topoisomerases break and join 2 DNA strands simultaneously in an ATP-dependent manner. The protein is DNA gyrase subunit B of Haloferax volcanii (strain ATCC 29605 / DSM 3757 / JCM 8879 / NBRC 14742 / NCIMB 2012 / VKM B-1768 / DS2) (Halobacterium volcanii).